The chain runs to 689 residues: Glycine--tRNA ligase beta subunit (689 aa).

The protein belongs to the class-II aminoacyl-tRNA synthetase family. Tetramer of two alpha and two beta subunits.

The protein resides in the cytoplasm. It carries out the reaction tRNA(Gly) + glycine + ATP = glycyl-tRNA(Gly) + AMP + diphosphate. This chain is Glycine--tRNA ligase beta subunit, found in Desulforapulum autotrophicum (strain ATCC 43914 / DSM 3382 / VKM B-1955 / HRM2) (Desulfobacterium autotrophicum).